The following is a 268-amino-acid chain: Tryptophan synthase alpha chain (268 aa).

Catalysis depends on proton acceptor residues Glu-49 and Asp-60.

This sequence belongs to the TrpA family. As to quaternary structure, tetramer of two alpha and two beta chains.

It carries out the reaction (1S,2R)-1-C-(indol-3-yl)glycerol 3-phosphate + L-serine = D-glyceraldehyde 3-phosphate + L-tryptophan + H2O. The protein operates within amino-acid biosynthesis; L-tryptophan biosynthesis; L-tryptophan from chorismate: step 5/5. Its function is as follows. The alpha subunit is responsible for the aldol cleavage of indoleglycerol phosphate to indole and glyceraldehyde 3-phosphate. This is Tryptophan synthase alpha chain from Vibrio vulnificus (strain CMCP6).